We begin with the raw amino-acid sequence, 351 residues long: Polyribonucleotide 5'-hydroxyl-kinase TK1956 (351 aa).

34–41 (GGVDSGKS) contacts ATP.

Requires a divalent metal cation as cofactor.

The catalysed reaction is a 5'-end dephospho-2'-deoxyribonucleoside-DNA + ATP = a 5'-end 5'-phospho-2'-deoxyribonucleoside-DNA + ADP + H(+). The enzyme catalyses a 5'-end dephospho-ribonucleoside-RNA + ATP = a 5'-end 5'-phospho-ribonucleoside-RNA + ADP + H(+). Polynucleotide kinase that can phosphorylate the 5'-hydroxyl groups of both single-stranded RNA (ssRNA) and single-stranded DNA (ssDNA). Exhibits a strong preference for ssRNA. The chain is Polyribonucleotide 5'-hydroxyl-kinase TK1956 from Thermococcus kodakarensis (strain ATCC BAA-918 / JCM 12380 / KOD1) (Pyrococcus kodakaraensis (strain KOD1)).